A 95-amino-acid chain; its full sequence is MHGNVATIEDIVLDLKPEPFDLYCREQLEDSDAEDETAVTQPDKQAFKVLSQCGGVCCKTVRLCVYSTHTGIRVLQELLHQDALQIVCPTCASRL.

The segment at 1–41 (MHGNVATIEDIVLDLKPEPFDLYCREQLEDSDAEDETAVTQ) is E7 terminal domain. Residues 22-26 (LYCRE) carry the LXCXE motif; interaction with host RB1 and TMEM173/STING motif. A zinc finger spans residues 53–91 (CGGVCCKTVRLCVYSTHTGIRVLQELLHQDALQIVCPTC). Positions 72 to 80 (IRVLQELLH) match the Nuclear export signal motif.

It belongs to the papillomaviridae E7 protein family. In terms of assembly, homodimer. Homooligomer. Interacts with host RB1; this interaction induces dissociation of RB1-E2F1 complex thereby disrupting RB1 activity. Interacts with host EP300; this interaction represses EP300 transcriptional activity. Interacts with protein E2; this interaction inhibits E7 oncogenic activity. Interacts with host TMEM173/STING; this interaction impairs the ability of TMEM173/STING to sense cytosolic DNA and promote the production of type I interferon (IFN-alpha and IFN-beta). Post-translationally, highly phosphorylated.

The protein localises to the host cytoplasm. It is found in the host nucleus. Its function is as follows. Plays a role in viral genome replication by driving entry of quiescent cells into the cell cycle. Stimulation of progression from G1 to S phase allows the virus to efficiently use the cellular DNA replicating machinery to achieve viral genome replication. E7 protein has both transforming and trans-activating activities. Induces the disassembly of the E2F1 transcription factor from RB1, with subsequent transcriptional activation of E2F1-regulated S-phase genes. Interferes with host histone deacetylation mediated by HDAC1 and HDAC2, leading to transcription activation. Also plays a role in the inhibition of both antiviral and antiproliferative functions of host interferon alpha. Interaction with host TMEM173/STING impairs the ability of TMEM173/STING to sense cytosolic DNA and promote the production of type I interferon (IFN-alpha and IFN-beta). The polypeptide is Protein E7 (Human papillomavirus type 54).